Here is a 320-residue protein sequence, read N- to C-terminus: MAASVSASCLNRLSSLAVVLVALASAASAQLSSTFYDRSCPNALSTIRSGVNSAVRQEPRVGASLLRLHFHDCFVRGCDASLLLNDTSGEQSQGPNLTLNPRGFVVVNSIKAQVESVCPGIVSCADILAVAARDGVVALGGPSWTVLLGRRDSTASFAGQTSDLPPPTSSLGQLLSAYNKKNLNPTDMVALSGAHTIGQAQCSSFNDHIYNDTNINSAFAASLRANCPRAGSTALAPLDTTTPNAFDNAYYTNLLSQKGLLHSDQELFNSGSTDSTVRSFASSTSAFNSAFATAMVKMGNLSPQTGTQGQIRRSCWKVNS.

The first 29 residues, 1–29 (MAASVSASCLNRLSSLAVVLVALASAASA), serve as a signal peptide directing secretion. Residue Q30 is modified to Pyrrolidone carboxylic acid. Intrachain disulfides connect C40–C118, C73–C78, C124–C315, and C202–C227. The active-site Proton acceptor is H71. Residues D72, V75, G77, D79, and S81 each coordinate Ca(2+). Residues N85 and N96 are each glycosylated (N-linked (GlcNAc...) asparagine). Residue P165 coordinates substrate. Residue H195 coordinates heme b. Ca(2+) is bound at residue T196. N-linked (GlcNAc...) asparagine glycosylation occurs at N211. Ca(2+)-binding residues include D239, T242, and D247.

Belongs to the peroxidase family. Classical plant (class III) peroxidase subfamily. The cofactor is heme b. It depends on Ca(2+) as a cofactor.

The protein resides in the secreted. It catalyses the reaction 2 a phenolic donor + H2O2 = 2 a phenolic radical donor + 2 H2O. Its function is as follows. Removal of H(2)O(2), oxidation of toxic reductants, biosynthesis and degradation of lignin, suberization, auxin catabolism, response to environmental stresses such as wounding, pathogen attack and oxidative stress. These functions might be dependent on each isozyme/isoform in each plant tissue. The chain is Peroxidase 66 (PER66) from Zea mays (Maize).